The chain runs to 466 residues: Keratin, type II cytoskeletal 7 (466 aa).

Residue Ser-2 is modified to N-acetylserine. A phosphoserine mark is found at Ser-2 and Ser-7. Residues 2 to 91 (SLHFGSQVFS…DPSIQQVRQE (90 aa)) form a head region. An O-linked (GlcNAc) serine glycan is attached at Ser-12. Dimethylated arginine; alternate is present on Arg-20. Position 20 is an omega-N-methylarginine; alternate (Arg-20). Residues Ser-54, Ser-72, and Ser-84 each carry the phosphoserine modification. The coil 1A stretch occupies residues 91-127 (EEREQIKTLNNKFASFIDKVRFLEQQNKLLETKWALL). The IF rod domain maps to 92-404 (EREQIKTLNN…KLLEGEESRL (313 aa)). A Phosphothreonine modification is found at Thr-98. A linker 1 region spans residues 128–145 (QEQKSAKSNRLPGIFEAQ). A Glycyl lysine isopeptide (Lys-Gly) (interchain with G-Cter in SUMO2) cross-link involves residue Lys-131. Positions 146–237 (IAGLRKQLEA…TLYEQELKEL (92 aa)) are coil 1B. Position 180 is an N6-acetyllysine (Lys-180). Residues 238-261 (QSEVSDTSVVLSMDNNRSLDLDSI) are linker 12. Ser-255 is subject to Phosphoserine. The interval 262 to 400 (IAEVKAQYEE…ATYRKLLEGE (139 aa)) is coil 2. Residues Lys-266 and Lys-287 each participate in a glycyl lysine isopeptide (Lys-Gly) (interchain with G-Cter in SUMO2) cross-link. Phosphothreonine is present on Thr-290. Residues Lys-297 and Lys-332 each participate in a glycyl lysine isopeptide (Lys-Gly) (interchain with G-Cter in SUMO2) cross-link. Residues 401–466 (ESRLTGDGVG…TSATSRSPRK (66 aa)) form a tail region.

Belongs to the intermediate filament family. As to quaternary structure, heterotetramer of two type I and two type II keratins. Interacts with eukaryotic translation initiator factor 3 (eIF3) subunit EIF3S10. Interacts with GPER1. Arg-20 is dimethylated, probably to asymmetric dimethylarginine.

Blocks interferon-dependent interphase and stimulates DNA synthesis in cells. The protein is Keratin, type II cytoskeletal 7 of Bos taurus (Bovine).